The chain runs to 218 residues: 1-Cys peroxiredoxin (218 aa).

The Thioredoxin domain occupies 4–164; the sequence is LTIGDTIPDL…VLRVVESLQK (161 aa). The active-site Cysteine sulfenic acid (-SOH) intermediate is cysteine 46. The short motif at 194 to 217 is the Bipartite nuclear localization signal element; the sequence is KEMFPQGFKTADLPSKKEYLRFTN.

This sequence belongs to the peroxiredoxin family. Prx6 subfamily.

The protein resides in the nucleus. Its subcellular location is the cytoplasm. The catalysed reaction is a hydroperoxide + [thioredoxin]-dithiol = an alcohol + [thioredoxin]-disulfide + H2O. Thiol-specific peroxidase that catalyzes the reduction of hydrogen peroxide and organic hydroperoxides to water and alcohols, respectively. Seems to contribute to the inhibition of germination during stress. This chain is 1-Cys peroxiredoxin, found in Medicago truncatula (Barrel medic).